The primary structure comprises 301 residues: DNA repair protein RecO (301 aa).

The tract at residues 272–301 (PTPSGQGSPVAAAAFSEEDSETLGSNLKKL) is disordered.

The protein belongs to the RecO family.

Functionally, involved in DNA repair and RecF pathway recombination. The sequence is that of DNA repair protein RecO from Synechococcus sp. (strain JA-3-3Ab) (Cyanobacteria bacterium Yellowstone A-Prime).